A 708-amino-acid chain; its full sequence is Serine/threonine-protein kinase Nek5 (708 aa).

The 256-residue stretch at 4–259 folds into the Protein kinase domain; the sequence is YDVIKAIGQG…INSILKRPFL (256 aa). ATP-binding positions include 10-18 and Lys33; that span reads IGQGAFGKA. The Proton acceptor role is filled by Asp128. Disordered stretches follow at residues 376–403 and 423–454; these read SYHPIPQENTGVEDYGQETRHGPSPSQW and KQLGLRPSSAEPNYNQRQELRSNGEEPRFQEL. Positions 440-454 are enriched in basic and acidic residues; the sequence is QELRSNGEEPRFQEL.

The protein belongs to the protein kinase superfamily. NEK Ser/Thr protein kinase family. NIMA subfamily. The cofactor is Mg(2+).

The protein localises to the cell projection. The protein resides in the cilium. Its subcellular location is the flagellum. It carries out the reaction L-seryl-[protein] + ATP = O-phospho-L-seryl-[protein] + ADP + H(+). The enzyme catalyses L-threonyl-[protein] + ATP = O-phospho-L-threonyl-[protein] + ADP + H(+). The protein is Serine/threonine-protein kinase Nek5 (NEK5) of Homo sapiens (Human).